Here is a 163-residue protein sequence, read N- to C-terminus: Lysosomal enzyme trafficking factor (163 aa).

2 helical membrane-spanning segments follow: residues 40-60 (MGWIGVGLYLLASAAAFYYVF) and 98-118 (LPFWFWTIIFLIPYLQMFLFL).

This sequence belongs to the LYSET family. In terms of assembly, interacts with GNPTAB; this interaction is important for proper localization of GNPTAB in Golgi stacks. Interacts with MBTPS1.

The protein localises to the golgi apparatus membrane. Functionally, required for mannose-6-phosphate-dependent trafficking of lysosomal enzymes. LYSET bridges GlcNAc-1-phosphate transferase (GNPTAB), to the membrane-bound transcription factor site-1 protease (MBTPS1), thus allowing proteolytic activation of the GNPTAB. GNPTAB is involved in the regulation of M6P-dependent Golgi-to-lysosome trafficking of lysosomal enzymes. LYSET is thus an essential factor for maturation and delivery of lysosomal hydrolases. This is Lysosomal enzyme trafficking factor (LYSET) from Sus scrofa (Pig).